The primary structure comprises 822 residues: Calpain-3 (822 aa).

Residues 1–36 (MPTVISASVAPRTGAEPRSPGPIAQAAQGKGTEAGG) are disordered. The region spanning 74 to 418 (LFVDPEFPPD…FTKLEICNLT (345 aa)) is the Calpain catalytic domain. Residues Cys129, His335, and Asn359 contribute to the active site. The tract at residues 419 to 587 (ADALESDKLQ…KRNLSEEVEN (169 aa)) is domain III. Residues 588-649 (TISVDRPVKK…LKPGNIDQES (62 aa)) are linker. Residues 600–651 (PKPIIFGSDRANSNKELGVDQESEEGKDNTSPDKQAKSPQLKPGNIDQESKE) form a disordered region. A compositionally biased stretch (basic and acidic residues) spans 623 to 635 (EEGKDNTSPDKQA). EF-hand domains follow at residues 650–684 (KEQRQFRNIFRQIAGDDMEICADELKNVLNRVVNK), 693–726 (FTLESCRSMIALMDTDGSGRLNLQEFHHLWKKIK), 723–758 (KKIKTWQKIFKHYDTDQSGTINSYEMRNAVNDAGFH), and 788–822 (VRLEGMFRAFNAFDKDGDGIIKLNVLEWLQLTMYA). Residues 650–822 (KEQRQFRNIF…LEWLQLTMYA (173 aa)) are domain IV. Residues Ala663, Asp666, Glu668, Glu673, Asp706, Asp708, Ser710, Arg712, Glu717, Asp736, Asp738, Ser740, Thr742, Glu747, Asp801, Asp803, Asp805, and Ile807 each coordinate Ca(2+).

Belongs to the peptidase C2 family. In terms of assembly, homodimer; via EF-hand domain 4. Interacts with TTN/titin. Interacts with CMYA5; this interaction, which results in CMYA5 proteolysis, may protect CAPN3 from autolysis. Interacts with SIMC1. Interacts with UTP25; the interaction is required for CAPN3 translocation to the nucleolus. Skeletal muscle.

The protein resides in the cytoplasm. The protein localises to the nucleus. It is found in the nucleolus. The enzyme catalyses Broad endopeptidase activity.. With respect to regulation, activated by micromolar concentrations of calcium and inhibited by calpastatin. Its function is as follows. Calcium-regulated non-lysosomal thiol-protease. Proteolytically cleaves CTBP1. Mediates, with UTP25, the proteasome-independent degradation of p53/TP53. The polypeptide is Calpain-3 (CAPN3) (Ovis aries (Sheep)).